The sequence spans 126 residues: Aspartate 1-decarboxylase (126 aa).

Ser-25 serves as the catalytic Schiff-base intermediate with substrate; via pyruvic acid. Ser-25 is subject to Pyruvic acid (Ser). Thr-57 serves as a coordination point for substrate. Tyr-58 acts as the Proton donor in catalysis. Residue 73–75 (GAA) participates in substrate binding.

This sequence belongs to the PanD family. In terms of assembly, heterooctamer of four alpha and four beta subunits. It depends on pyruvate as a cofactor. Post-translationally, is synthesized initially as an inactive proenzyme, which is activated by self-cleavage at a specific serine bond to produce a beta-subunit with a hydroxyl group at its C-terminus and an alpha-subunit with a pyruvoyl group at its N-terminus.

It is found in the cytoplasm. It carries out the reaction L-aspartate + H(+) = beta-alanine + CO2. The protein operates within cofactor biosynthesis; (R)-pantothenate biosynthesis; beta-alanine from L-aspartate: step 1/1. Functionally, catalyzes the pyruvoyl-dependent decarboxylation of aspartate to produce beta-alanine. This is Aspartate 1-decarboxylase from Cellvibrio japonicus (strain Ueda107) (Pseudomonas fluorescens subsp. cellulosa).